A 383-amino-acid chain; its full sequence is Dual-specificity RNA methyltransferase RlmN (383 aa).

E93 acts as the Proton acceptor in catalysis. The 241-residue stretch at 99–339 (EETRGTLCVS…TTIRKTRGDD (241 aa)) folds into the Radical SAM core domain. An intrachain disulfide couples C106 to C344. 3 residues coordinate [4Fe-4S] cluster: C113, C117, and C120. Residues 170–171 (GE), S202, 224–226 (SLH), and N301 contribute to the S-adenosyl-L-methionine site. C344 serves as the catalytic S-methylcysteine intermediate.

The protein belongs to the radical SAM superfamily. RlmN family. [4Fe-4S] cluster serves as cofactor.

It localises to the cytoplasm. The enzyme catalyses adenosine(2503) in 23S rRNA + 2 reduced [2Fe-2S]-[ferredoxin] + 2 S-adenosyl-L-methionine = 2-methyladenosine(2503) in 23S rRNA + 5'-deoxyadenosine + L-methionine + 2 oxidized [2Fe-2S]-[ferredoxin] + S-adenosyl-L-homocysteine. It catalyses the reaction adenosine(37) in tRNA + 2 reduced [2Fe-2S]-[ferredoxin] + 2 S-adenosyl-L-methionine = 2-methyladenosine(37) in tRNA + 5'-deoxyadenosine + L-methionine + 2 oxidized [2Fe-2S]-[ferredoxin] + S-adenosyl-L-homocysteine. Specifically methylates position 2 of adenine 2503 in 23S rRNA and position 2 of adenine 37 in tRNAs. m2A2503 modification seems to play a crucial role in the proofreading step occurring at the peptidyl transferase center and thus would serve to optimize ribosomal fidelity. The sequence is that of Dual-specificity RNA methyltransferase RlmN from Ralstonia nicotianae (strain ATCC BAA-1114 / GMI1000) (Ralstonia solanacearum).